The primary structure comprises 105 residues: UPF0235 protein RT0827 (105 aa).

Belongs to the UPF0235 family.

This is UPF0235 protein RT0827 from Rickettsia typhi (strain ATCC VR-144 / Wilmington).